We begin with the raw amino-acid sequence, 172 residues long: 3-phenylpropionate/cinnamic acid dioxygenase subunit beta (172 aa).

It belongs to the bacterial ring-hydroxylating dioxygenase beta subunit family. As to quaternary structure, this dioxygenase system consists of four proteins: the two subunits of the hydroxylase component (HcaE and HcaF), a ferredoxin (HcaC) and a ferredoxin reductase (HcaD).

It catalyses the reaction 3-phenylpropanoate + NADH + O2 + H(+) = 3-(cis-5,6-dihydroxycyclohexa-1,3-dien-1-yl)propanoate + NAD(+). It carries out the reaction (E)-cinnamate + NADH + O2 + H(+) = (2E)-3-(cis-5,6-dihydroxycyclohexa-1,3-dien-1-yl)prop-2-enoate + NAD(+). Its pathway is aromatic compound metabolism; 3-phenylpropanoate degradation. Part of the multicomponent 3-phenylpropionate dioxygenase. Converts 3-phenylpropionic acid (PP) and cinnamic acid (CI) into 3-phenylpropionate-dihydrodiol (PP-dihydrodiol) and cinnamic acid-dihydrodiol (CI-dihydrodiol), respectively. The protein is 3-phenylpropionate/cinnamic acid dioxygenase subunit beta of Escherichia coli O157:H7.